Reading from the N-terminus, the 737-residue chain is ARMADILLO BTB ARABIDOPSIS PROTEIN 1 (737 aa).

ARM repeat units follow at residues 112–154 (DENV…KDCA), 165–212 (PGYQ…NIAH), 215–254 (PRIK…TVSF), 257–296 (DENK…NLVH), 299–338 (PDIK…QFAA), 341–380 (SDCK…RLAQ), 382–421 (AHNQ…GLAD), 456–495 (LKRL…HLCD), and 497–536 (KDGK…ELAK). One can recognise a BTB domain in the interval 568–635 (SDVTFLIDGK…IYSGRINIAK (68 aa)).

In terms of assembly, forms a heterodimeric complex with TCP24. Interacts with the origin recognition complex (preRC) components ORC1A, ORC1B, CDT1A and CDT1B. Interacts with DUF7/AIP1. Weakly expressed in the emerging lateral roots and mainly expressed in the shoot apex, young leaves and flower buds.

The protein resides in the nucleus. It functions in the pathway protein modification; protein ubiquitination. Functionally, may act as a substrate-specific adapter of an E3 ubiquitin-protein ligase complex (CUL3-RBX1-BTB) which mediates the ubiquitination and subsequent proteasomal degradation of target proteins. In association with TCP24, exerts a negative role in cell proliferation in leaves, possibly by inhibiting mitotic DNA replication. This Arabidopsis thaliana (Mouse-ear cress) protein is ARMADILLO BTB ARABIDOPSIS PROTEIN 1 (ABAP1).